A 96-amino-acid polypeptide reads, in one-letter code: Small ribosomal subunit protein bS16m (96 aa).

The protein belongs to the bacterial ribosomal protein bS16 family. Component of the mitochondrial small ribosomal subunit (mt-SSU). Mature yeast 74S mitochondrial ribosomes consist of a small (37S) and a large (54S) subunit. The 37S small subunit contains a 15S ribosomal RNA (15S mt-rRNA) and at least 32 different proteins. The 54S large subunit contains a 21S rRNA (21S mt-rRNA) and at least 45 different proteins.

It localises to the mitochondrion. Its function is as follows. Component of the mitochondrial ribosome (mitoribosome), a dedicated translation machinery responsible for the synthesis of mitochondrial genome-encoded proteins, including at least some of the essential transmembrane subunits of the mitochondrial respiratory chain. The mitoribosomes are attached to the mitochondrial inner membrane and translation products are cotranslationally integrated into the membrane. In Schizosaccharomyces pombe (strain 972 / ATCC 24843) (Fission yeast), this protein is Small ribosomal subunit protein bS16m (mrps16).